Consider the following 391-residue polypeptide: Elongation factor Tu 2 (391 aa).

Residues 10–201 (KPHVNIGTIG…EVDRYIPTPE (192 aa)) form the tr-type G domain. The segment at 19-26 (GHVDHGKT) is G1. 19–26 (GHVDHGKT) contributes to the GTP binding site. Position 26 (Thr26) interacts with Mg(2+). Residues 55–59 (GITIS) are G2. A G3 region spans residues 76-79 (DCPG). GTP-binding positions include 76–80 (DCPGH) and 131–134 (NKVD). The tract at residues 131-134 (NKVD) is G4. The G5 stretch occupies residues 169 to 171 (SAL).

The protein belongs to the TRAFAC class translation factor GTPase superfamily. Classic translation factor GTPase family. EF-Tu/EF-1A subfamily. Monomer.

The protein localises to the cytoplasm. It carries out the reaction GTP + H2O = GDP + phosphate + H(+). Its function is as follows. GTP hydrolase that promotes the GTP-dependent binding of aminoacyl-tRNA to the A-site of ribosomes during protein biosynthesis. The polypeptide is Elongation factor Tu 2 (Bartonella bacilliformis (strain ATCC 35685 / KC583 / Herrer 020/F12,63)).